Reading from the N-terminus, the 348-residue chain is Dihydroorotase (348 aa).

2 residues coordinate Zn(2+): histidine 17 and histidine 19. Substrate is bound by residues 19–21 and asparagine 45; that span reads HLR. Residues lysine 103, histidine 140, and histidine 178 each coordinate Zn(2+). An N6-carboxylysine modification is found at lysine 103. A substrate-binding site is contributed by histidine 140. Position 223 (leucine 223) interacts with substrate. Zn(2+) is bound at residue aspartate 251. The active site involves aspartate 251. Residues histidine 255 and alanine 267 each coordinate substrate.

It belongs to the metallo-dependent hydrolases superfamily. DHOase family. Class II DHOase subfamily. As to quaternary structure, homodimer. Zn(2+) serves as cofactor.

The catalysed reaction is (S)-dihydroorotate + H2O = N-carbamoyl-L-aspartate + H(+). The protein operates within pyrimidine metabolism; UMP biosynthesis via de novo pathway; (S)-dihydroorotate from bicarbonate: step 3/3. Catalyzes the reversible cyclization of carbamoyl aspartate to dihydroorotate. This is Dihydroorotase from Salmonella newport (strain SL254).